A 119-amino-acid polypeptide reads, in one-letter code: Neuropeptide B (119 aa).

An N-terminal signal peptide occupies residues 1–21; that stretch reads MVRCRTLVAAALALLLTPALA. Positions 53-119 are excised as a propeptide; the sequence is SESPALRVGT…SLHKAECQSA (67 aa).

It belongs to the neuropeptide B/W family. Detected in a variety of tissues. High levels are found in the lymphoid organs, central nervous system, mammary gland and uterus.

The protein resides in the secreted. Its function is as follows. May be involved in the regulation of feeding, neuroendocrine system, memory and learning. May be involved in the afferent pain pathway. This Rattus norvegicus (Rat) protein is Neuropeptide B (Npb).